A 378-amino-acid polypeptide reads, in one-letter code: TelA-like protein SAB1262 (378 aa).

It belongs to the TelA family.

This chain is TelA-like protein SAB1262, found in Staphylococcus aureus (strain bovine RF122 / ET3-1).